The primary structure comprises 161 residues: Gamma-glutamylaminecyclotransferase A (161 aa).

A substrate-binding site is contributed by Y26–L29. The active-site Proton acceptor is the E101.

The protein belongs to the gamma-glutamylcyclotransferase family.

The enzyme catalyses epsilon-(gamma-L-glutamyl)-L-lysine = 5-oxo-L-proline + L-lysine. In terms of biological role, may contribute to degradation of proteins cross-linked by transglutaminases by degrading the cross-link between a lysine and a glutamic acid residue. Catalyzes the formation of 5-oxo-L-proline from L-gamma-glutamyl-L-epsilon-lysine. The protein is Gamma-glutamylaminecyclotransferase A (ggact.1) of Danio rerio (Zebrafish).